The primary structure comprises 102 residues: Large ribosomal subunit protein uL24 (102 aa).

This sequence belongs to the universal ribosomal protein uL24 family. In terms of assembly, part of the 50S ribosomal subunit.

Functionally, one of two assembly initiator proteins, it binds directly to the 5'-end of the 23S rRNA, where it nucleates assembly of the 50S subunit. Its function is as follows. One of the proteins that surrounds the polypeptide exit tunnel on the outside of the subunit. The polypeptide is Large ribosomal subunit protein uL24 (Lysinibacillus sphaericus (strain C3-41)).